The chain runs to 428 residues: MNCVKINPCCLKGDIKIPPSKSLGHRAIICAALSEEESTIENISYSKDIKATCIGMSKLGALIIEDAKDNSTLKIKKQKLVSKEKVYIDCSESGSTVRFLIPISLIEERNVVFDGQGKLSYRPLDSYFNIFDEKEIAYSHPEGKVLPLQIKGRLKAGMFNLPGNISSQFISGLMFSLPFLEGDSIINITTNLESVGYVDMTIDMLKKFGIEIENKAYKSFFIKGNQKCKGTKYKVEGDFSQAAFWLSAGILNGNINCKDLNISSLQGDKVILDILKKMGGAIDEKSFSSKKSHTHGIVIDASQCPDLVPILSVVAALSEGTTKIVNAARLRIKESDRLKAMATELNKLGAEVVELEDGLLIEGKEKLKGGEVESWNDHRIAMALGIAALRCEESVTINGSECVSKSYPQFWSDLKQLGGDVHEWSLGE.

Lysine 21, serine 22, and arginine 26 together coordinate 3-phosphoshikimate. Lysine 21 provides a ligand contact to phosphoenolpyruvate. Glycine 94 and arginine 122 together coordinate phosphoenolpyruvate. Residues serine 166, serine 167, glutamine 168, serine 194, aspartate 306, and lysine 333 each coordinate 3-phosphoshikimate. A phosphoenolpyruvate-binding site is contributed by glutamine 168. Aspartate 306 (proton acceptor) is an active-site residue. 3 residues coordinate phosphoenolpyruvate: arginine 337, arginine 379, and lysine 405.

It belongs to the EPSP synthase family. In terms of assembly, monomer.

Its subcellular location is the cytoplasm. It catalyses the reaction 3-phosphoshikimate + phosphoenolpyruvate = 5-O-(1-carboxyvinyl)-3-phosphoshikimate + phosphate. It functions in the pathway metabolic intermediate biosynthesis; chorismate biosynthesis; chorismate from D-erythrose 4-phosphate and phosphoenolpyruvate: step 6/7. Its function is as follows. Catalyzes the transfer of the enolpyruvyl moiety of phosphoenolpyruvate (PEP) to the 5-hydroxyl of shikimate-3-phosphate (S3P) to produce enolpyruvyl shikimate-3-phosphate and inorganic phosphate. This is 3-phosphoshikimate 1-carboxyvinyltransferase from Clostridium acetobutylicum (strain ATCC 824 / DSM 792 / JCM 1419 / IAM 19013 / LMG 5710 / NBRC 13948 / NRRL B-527 / VKM B-1787 / 2291 / W).